A 100-amino-acid polypeptide reads, in one-letter code: Glyceraldehyde-3-phosphate dehydrogenase, testis-specific (100 aa).

Residues aspartate 39 and threonine 64 each coordinate NAD(+). D-glyceraldehyde 3-phosphate is bound at residue arginine 89.

This sequence belongs to the glyceraldehyde-3-phosphate dehydrogenase family. As to quaternary structure, homotetramer.

It localises to the cytoplasm. It catalyses the reaction D-glyceraldehyde 3-phosphate + phosphate + NAD(+) = (2R)-3-phospho-glyceroyl phosphate + NADH + H(+). The protein operates within carbohydrate degradation; glycolysis; pyruvate from D-glyceraldehyde 3-phosphate: step 1/5. In terms of biological role, may play an important role in regulating the switch between different pathways for energy production during spermiogenesis and in the spermatozoon. Required for sperm motility and male fertility. The polypeptide is Glyceraldehyde-3-phosphate dehydrogenase, testis-specific (Mesocricetus auratus (Golden hamster)).